Reading from the N-terminus, the 374-residue chain is Ribosomal RNA large subunit methyltransferase G (374 aa).

The protein belongs to the methyltransferase superfamily. RlmG family.

Its subcellular location is the cytoplasm. It carries out the reaction guanosine(1835) in 23S rRNA + S-adenosyl-L-methionine = N(2)-methylguanosine(1835) in 23S rRNA + S-adenosyl-L-homocysteine + H(+). Specifically methylates the guanine in position 1835 (m2G1835) of 23S rRNA. This Photobacterium profundum (strain SS9) protein is Ribosomal RNA large subunit methyltransferase G.